A 176-amino-acid chain; its full sequence is Adenine phosphoribosyltransferase (176 aa).

It belongs to the purine/pyrimidine phosphoribosyltransferase family. In terms of assembly, homodimer.

It localises to the cytoplasm. It catalyses the reaction AMP + diphosphate = 5-phospho-alpha-D-ribose 1-diphosphate + adenine. Its pathway is purine metabolism; AMP biosynthesis via salvage pathway; AMP from adenine: step 1/1. In terms of biological role, catalyzes a salvage reaction resulting in the formation of AMP, that is energically less costly than de novo synthesis. This Leuconostoc mesenteroides subsp. mesenteroides (strain ATCC 8293 / DSM 20343 / BCRC 11652 / CCM 1803 / JCM 6124 / NCDO 523 / NBRC 100496 / NCIMB 8023 / NCTC 12954 / NRRL B-1118 / 37Y) protein is Adenine phosphoribosyltransferase.